We begin with the raw amino-acid sequence, 44 residues long: Mu-conotoxin-like Cal 12.1.1e (44 aa).

Cystine bridges form between cysteine 3-cysteine 16, cysteine 11-cysteine 28, cysteine 18-cysteine 33, and cysteine 27-cysteine 38. Tryptophan 17 is modified (6'-bromotryptophan). The residue at position 23 (proline 23) is a 4-hydroxyproline. Residues tryptophan 36 and tryptophan 37 each carry the 6'-bromotryptophan modification. Proline 39 bears the 4-hydroxyproline mark. Tryptophan 43 is modified (6'-bromotryptophan).

In terms of tissue distribution, expressed by the venom duct.

It is found in the secreted. In terms of biological role, mu-conotoxins block voltage-gated sodium channels. This toxin reversibly blocks voltage-gated sodium channel in cephalopods, with no alteration in the voltage dependence of sodium conductance or on the kinetics of inactivation. The sequence is that of Mu-conotoxin-like Cal 12.1.1e from Californiconus californicus (California cone).